The primary structure comprises 647 residues: Acetyl-coenzyme A synthetase (647 aa).

CoA is bound by residues Arg-190–Lys-193, Thr-310, and Asn-334. Residues Gly-386 to Pro-388, Asp-410 to Thr-415, Asp-499, and Arg-514 contribute to the ATP site. A CoA-binding site is contributed by Ser-522. An ATP-binding site is contributed by Arg-525. Residues Val-536, His-538, and Val-541 each contribute to the Mg(2+) site. Position 583 (Arg-583) interacts with CoA. Lys-608 carries the post-translational modification N6-acetyllysine.

It belongs to the ATP-dependent AMP-binding enzyme family. It depends on Mg(2+) as a cofactor. Post-translationally, acetylated. Deacetylation by the SIR2-homolog deacetylase activates the enzyme.

The enzyme catalyses acetate + ATP + CoA = acetyl-CoA + AMP + diphosphate. Its function is as follows. Catalyzes the conversion of acetate into acetyl-CoA (AcCoA), an essential intermediate at the junction of anabolic and catabolic pathways. AcsA undergoes a two-step reaction. In the first half reaction, AcsA combines acetate with ATP to form acetyl-adenylate (AcAMP) intermediate. In the second half reaction, it can then transfer the acetyl group from AcAMP to the sulfhydryl group of CoA, forming the product AcCoA. The sequence is that of Acetyl-coenzyme A synthetase from Xanthomonas campestris pv. campestris (strain 8004).